Here is a 169-residue protein sequence, read N- to C-terminus: NSSYRIISIGRGALGGDVYLGKSPNSDAPCPDGVFRYNSDVGPSGTPVRFIPLSTNIFEDQLLNIQFNIPTVKLCVSYTIWKVGNLNAYFRTMLLETGGTIGQADNSYFKIVKSSKIGYNLLSCPFTSIICLRCPEDQFCAKVGVVIQNGKRRLALVNENPLDVLFQEV.

Asn1 is a glycosylation site (N-linked (GlcNAc...) asparagine). Disulfide bonds link Cys30–Cys75 and Cys124–Cys134.

The protein belongs to the protease inhibitor I3 (leguminous Kunitz-type inhibitor) family.

The protein resides in the vacuole. In terms of biological role, inhibitor of cathepsin D (aspartic protease). May also inhibit trypsin and chymotrypsin (serine proteases). Protects the plant by inhibiting proteases of invading organisms. This Solanum tuberosum (Potato) protein is Aspartic protease inhibitor 3.